A 208-amino-acid polypeptide reads, in one-letter code: Peptidyl-tRNA hydrolase 2 (208 aa).

A compositionally biased stretch (low complexity) spans 32-45 (SNASSTKKSSATLL). The tract at residues 32 to 81 (SNASSTKKSSATLLRSKEMKEGKLHNDTDEEESESEDESDEDEDIESTSL) is disordered. The span at 46–58 (RSKEMKEGKLHND) shows a compositional bias: basic and acidic residues. The segment covering 59–77 (TDEEESESEDESDEDEDIE) has biased composition (acidic residues). Lys152 is covalently cross-linked (Glycyl lysine isopeptide (Lys-Gly) (interchain with G-Cter in ubiquitin)).

This sequence belongs to the PTH2 family.

The protein resides in the cytoplasm. The catalysed reaction is an N-acyl-L-alpha-aminoacyl-tRNA + H2O = an N-acyl-L-amino acid + a tRNA + H(+). Its function is as follows. The natural substrate for this enzyme may be peptidyl-tRNAs which drop off the ribosome during protein synthesis. The protein is Peptidyl-tRNA hydrolase 2 of Saccharomyces cerevisiae (strain ATCC 204508 / S288c) (Baker's yeast).